We begin with the raw amino-acid sequence, 200 residues long: Urease accessory protein UreE (200 aa).

The tract at residues histidine 171–histidine 200 is disordered.

Belongs to the UreE family.

Its subcellular location is the cytoplasm. Its function is as follows. Involved in urease metallocenter assembly. Binds nickel. Probably functions as a nickel donor during metallocenter assembly. The chain is Urease accessory protein UreE from Burkholderia vietnamiensis (strain G4 / LMG 22486) (Burkholderia cepacia (strain R1808)).